Here is a 65-residue protein sequence, read N- to C-terminus: Large ribosomal subunit protein bL35 (65 aa).

The protein belongs to the bacterial ribosomal protein bL35 family.

The sequence is that of Large ribosomal subunit protein bL35 from Blochmanniella pennsylvanica (strain BPEN).